The sequence spans 105 residues: Pyrimidine/purine nucleoside phosphorylase (105 aa).

This sequence belongs to the nucleoside phosphorylase PpnP family.

The catalysed reaction is a purine D-ribonucleoside + phosphate = a purine nucleobase + alpha-D-ribose 1-phosphate. The enzyme catalyses adenosine + phosphate = alpha-D-ribose 1-phosphate + adenine. It carries out the reaction cytidine + phosphate = cytosine + alpha-D-ribose 1-phosphate. It catalyses the reaction guanosine + phosphate = alpha-D-ribose 1-phosphate + guanine. The catalysed reaction is inosine + phosphate = alpha-D-ribose 1-phosphate + hypoxanthine. The enzyme catalyses thymidine + phosphate = 2-deoxy-alpha-D-ribose 1-phosphate + thymine. It carries out the reaction uridine + phosphate = alpha-D-ribose 1-phosphate + uracil. It catalyses the reaction xanthosine + phosphate = alpha-D-ribose 1-phosphate + xanthine. Its function is as follows. Catalyzes the phosphorolysis of diverse nucleosides, yielding D-ribose 1-phosphate and the respective free bases. Can use uridine, adenosine, guanosine, cytidine, thymidine, inosine and xanthosine as substrates. Also catalyzes the reverse reactions. The polypeptide is Pyrimidine/purine nucleoside phosphorylase (Cupriavidus pinatubonensis (strain JMP 134 / LMG 1197) (Cupriavidus necator (strain JMP 134))).